Here is a 348-residue protein sequence, read N- to C-terminus: tRNA N6-adenosine threonylcarbamoyltransferase (348 aa).

Residues His-116 and His-120 each contribute to the Fe cation site. Residues 138-142, Asp-171, Gly-184, Asp-188, and Asn-277 contribute to the substrate site; that span reads QVSGG. Asp-309 provides a ligand contact to Fe cation.

The protein belongs to the KAE1 / TsaD family. It depends on Fe(2+) as a cofactor.

It localises to the cytoplasm. It carries out the reaction L-threonylcarbamoyladenylate + adenosine(37) in tRNA = N(6)-L-threonylcarbamoyladenosine(37) in tRNA + AMP + H(+). Functionally, required for the formation of a threonylcarbamoyl group on adenosine at position 37 (t(6)A37) in tRNAs that read codons beginning with adenine. Is involved in the transfer of the threonylcarbamoyl moiety of threonylcarbamoyl-AMP (TC-AMP) to the N6 group of A37, together with TsaE and TsaB. TsaD likely plays a direct catalytic role in this reaction. The protein is tRNA N6-adenosine threonylcarbamoyltransferase of Lactobacillus johnsonii (strain CNCM I-12250 / La1 / NCC 533).